The sequence spans 160 residues: uncharacterized protein (160 aa).

3 consecutive C2H2-type zinc fingers follow at residues 10-32 (LSCL…LPTH), 41-64 (QTCD…KRYH), and 75-98 (FQCQ…KIEH). Y115 carries the phosphotyrosine modification. S116 carries the post-translational modification Phosphoserine.

Its subcellular location is the nucleus. In terms of biological role, may be involved in transcriptional regulation. This is an uncharacterized protein from Drosophila melanogaster (Fruit fly).